We begin with the raw amino-acid sequence, 167 residues long: Beta-3 adrenergic receptor (167 aa).

Over 1 to 25 (RVGADAEAQECHSNPRCCSFASNMP) the chain is Extracellular. A disulfide bond links C11 and C17. A helical transmembrane segment spans residues 26 to 47 (YALLSSSVSFYLPLLVMLFVYA). Topologically, residues 48–114 (RVFVVAKRQR…LPLREHRALR (67 aa)) are cytoplasmic. Positions 66 to 97 (RFPPEESPRSPSRSPSPVAGGTGEAPDGVPSC) are disordered. A helical membrane pass occupies residues 115–136 (TLGLIMGIFSLCWLPFFLANVL). The Extracellular segment spans residues 137-148 (RALAGPSIVPNG). The helical transmembrane segment at 149–167 (VFIALNWLGYANSAFNPLI) threads the bilayer.

The protein belongs to the G-protein coupled receptor 1 family. Adrenergic receptor subfamily. ADRB3 sub-subfamily. Interacts with ARRDC3.

It is found in the cell membrane. Beta-adrenergic receptors mediate the catecholamine-induced activation of adenylate cyclase through the action of G proteins. Beta-3 is involved in the regulation of lipolysis and thermogenesis. This is Beta-3 adrenergic receptor (ADRB3) from Meriones unguiculatus (Mongolian jird).